We begin with the raw amino-acid sequence, 739 residues long: Thiamine biosynthesis multifunctional protein ThiED (739 aa).

Residues 1 to 210 (MTDFSLYLVT…PSPAEAAREL (210 aa)) are thiamine-phosphate synthase. 4-amino-2-methyl-5-(diphosphooxymethyl)pyrimidine is bound by residues 37-41 (QLRDK) and asparagine 69. Residues aspartate 70 and aspartate 88 each coordinate Mg(2+). Threonine 107 lines the 4-amino-2-methyl-5-(diphosphooxymethyl)pyrimidine pocket. 2-[(2R,5Z)-2-carboxy-4-methylthiazol-5(2H)-ylidene]ethyl phosphate is bound at residue 140–142 (TDT). Lysine 143 serves as a coordination point for 4-amino-2-methyl-5-(diphosphooxymethyl)pyrimidine. 2-[(2R,5Z)-2-carboxy-4-methylthiazol-5(2H)-ylidene]ethyl phosphate contacts are provided by residues glycine 174 and 194–195 (VS). A hydroxymethylpyrimidine/phosphomethylpyrimidine kinase region spans residues 226-481 (LTIAGTDPTG…GSGSGPVDHF (256 aa)). Residue glutamine 263 coordinates 4-amino-5-hydroxymethyl-2-methylpyrimidine. The tract at residues 527–739 (YTRALWEATG…FDQATRQGWN (213 aa)) is thiaminase-2.

The protein in the N-terminal section; belongs to the thiamine-phosphate synthase family. This sequence in the central section; belongs to the ThiD family. In the C-terminal section; belongs to the thiaminase-2 family. It depends on Mg(2+) as a cofactor.

The catalysed reaction is 2-[(2R,5Z)-2-carboxy-4-methylthiazol-5(2H)-ylidene]ethyl phosphate + 4-amino-2-methyl-5-(diphosphooxymethyl)pyrimidine + 2 H(+) = thiamine phosphate + CO2 + diphosphate. It catalyses the reaction 2-(2-carboxy-4-methylthiazol-5-yl)ethyl phosphate + 4-amino-2-methyl-5-(diphosphooxymethyl)pyrimidine + 2 H(+) = thiamine phosphate + CO2 + diphosphate. The enzyme catalyses 4-methyl-5-(2-phosphooxyethyl)-thiazole + 4-amino-2-methyl-5-(diphosphooxymethyl)pyrimidine + H(+) = thiamine phosphate + diphosphate. It carries out the reaction 4-amino-5-hydroxymethyl-2-methylpyrimidine + ATP = 4-amino-2-methyl-5-(phosphooxymethyl)pyrimidine + ADP + H(+). The catalysed reaction is 4-amino-2-methyl-5-(phosphooxymethyl)pyrimidine + ATP = 4-amino-2-methyl-5-(diphosphooxymethyl)pyrimidine + ADP. It functions in the pathway cofactor biosynthesis; thiamine diphosphate biosynthesis; 4-amino-2-methyl-5-diphosphomethylpyrimidine from 5-amino-1-(5-phospho-D-ribosyl)imidazole: step 3/3. It participates in cofactor biosynthesis; thiamine diphosphate biosynthesis; thiamine phosphate from 4-amino-2-methyl-5-diphosphomethylpyrimidine and 4-methyl-5-(2-phosphoethyl)-thiazole: step 1/1. Functionally, condenses 4-methyl-5-(beta-hydroxyethyl)thiazole monophosphate (THZ-P) and 2-methyl-4-amino-5-hydroxymethyl pyrimidine pyrophosphate (HMP-PP) to form thiamine monophosphate (TMP). Catalyzes the phosphorylation of hydroxymethylpyrimidine phosphate (HMP-P) to HMP-PP, and of HMP to HMP-P. This chain is Thiamine biosynthesis multifunctional protein ThiED (thiED), found in Corynebacterium efficiens (strain DSM 44549 / YS-314 / AJ 12310 / JCM 11189 / NBRC 100395).